The sequence spans 601 residues: Glutamyl-tRNA(Gln) amidotransferase subunit B, mitochondrial (601 aa).

A mitochondrion-targeting transit peptide spans Met-1–Ser-52.

This sequence belongs to the GatB/GatE family. GatB subfamily. As to quaternary structure, subunit of the heterotrimeric GatCAB amidotransferase (AdT) complex, composed of A, B and C subunits.

It localises to the mitochondrion. The catalysed reaction is L-glutamyl-tRNA(Gln) + L-glutamine + ATP + H2O = L-glutaminyl-tRNA(Gln) + L-glutamate + ADP + phosphate + H(+). In terms of biological role, allows the formation of correctly charged Gln-tRNA(Gln) through the transamidation of misacylated Glu-tRNA(Gln) in the mitochondria. The reaction takes place in the presence of glutamine and ATP through an activated gamma-phospho-Glu-tRNA(Gln). The sequence is that of Glutamyl-tRNA(Gln) amidotransferase subunit B, mitochondrial from Neosartorya fischeri (strain ATCC 1020 / DSM 3700 / CBS 544.65 / FGSC A1164 / JCM 1740 / NRRL 181 / WB 181) (Aspergillus fischerianus).